The sequence spans 849 residues: MANILRKIIENDKGEIKKLEKTAKKVESYADAMAALSDEELQAKTEEFKQRYQNGESLDQLLPEAFAVVREGAKRVLGLFPYRVQIMGGIVLHHGDVAEMRTGEGKTLTATMPVYLNAISGEGVHVITVNEYLSERDATEMGELYSWLGLSVGINLSSKSPAEKREAYNCDITYSTSSEVGFDYLRDNMVVRKENMVQRPLNFALVDEVDSVLIDEARTPLIVSGPVSSETNQLYHRADAFVKTLTEDDYAIDIPTKTIGLNDSGIDKAEEFFNLENLYDIDNVALTHYIDNALRANYIMLRDIDYVVSPEQEILIVDQFTGRTMEGRRFSDGLHQAIEAKEGVPVQEETKTSASITYQNMFRMYKKLSGMTGTGKTEEDEFREIYNMRVIPIPTNRPIQRIDHDDLLYSTLDAKFRAVVQDVKRRYDKGQPVLIGTVAVETSDLISKMLVDAGIPHEVLNAKNHEKEAHIIMNAGQRGAVTIATNMAGRGTDIKLGEGVLELGGLCVIGTERHESRRIDNQLRGRSGRQGDPGESQFYLSLEDELMRRFGSDRIKHVLERLNADDEDIVIKSRMLTRQVESAQKRVEGNNYDTRKQVLQYDDVMREQREIIYAERYDVITAERDLEPEIKAMIKRTINRTVDGHSRNDQEEALKGILNFARQALVPEDAISLEDLKEVGEVTKRSVNYDAIKVYLTELADNVYDRQIKKLRSEEAIREFQKVLILMVVDNKWTDHIDALDQLRNAVGMRGYAQNNPIVEYQSESFKMFQDMIGAIEYDVTRTMMKAQIHEQSREHVNERVSTTATGNIQAHQADANGQEIDFSKVGRNDFCPCGSGKKFKNCHGRKQF.

Residues Gln-85, 103–107 (GEGKT), and Asp-493 contribute to the ATP site. The Zn(2+) site is built by Cys-832, Cys-834, Cys-843, and His-844.

This sequence belongs to the SecA family. In terms of assembly, monomer and homodimer. Part of the essential Sec protein translocation apparatus which comprises SecA, SecYEG and auxiliary proteins SecDF. Other proteins may also be involved. Zn(2+) serves as cofactor.

It is found in the cell membrane. The protein localises to the cytoplasm. The enzyme catalyses ATP + H2O + cellular proteinSide 1 = ADP + phosphate + cellular proteinSide 2.. Its function is as follows. Part of the Sec protein translocase complex. Interacts with the SecYEG preprotein conducting channel. Has a central role in coupling the hydrolysis of ATP to the transfer of proteins into and across the cell membrane, serving as an ATP-driven molecular motor driving the stepwise translocation of polypeptide chains across the membrane. In Streptococcus thermophilus (strain CNRZ 1066), this protein is Protein translocase subunit SecA.